Here is a 252-residue protein sequence, read N- to C-terminus: Small ribosomal subunit protein uS2B (252 aa).

Position 2 is an N-acetylserine (Ser2). Composition is skewed to acidic residues over residues 213–229 (VAEEAAAAEEGEEEEVK) and 241–252 (EWAEENADNVEW). The tract at residues 213–252 (VAEEAAAAEEGEEEEVKEEVTEGQAEATEWAEENADNVEW) is disordered.

Belongs to the universal ribosomal protein uS2 family. Component of the small ribosomal subunit. Mature ribosomes consist of a small (40S) and a large (60S) subunit. The 40S subunit contains about 33 different proteins and 1 molecule of RNA (18S). The 60S subunit contains about 49 different proteins and 3 molecules of RNA (25S, 5.8S and 5S). Interacts with RPS21.

The protein localises to the cytoplasm. Required for the assembly and/or stability of the 40S ribosomal subunit. Required for the processing of the 20S rRNA-precursor to mature 18S rRNA in a late step of the maturation of 40S ribosomal subunits. This Saccharomyces cerevisiae (strain RM11-1a) (Baker's yeast) protein is Small ribosomal subunit protein uS2B.